The primary structure comprises 224 residues: Octanoyltransferase (224 aa).

The BPL/LPL catalytic domain maps to Ala-38–Ser-213. Residues Arg-77–His-84, Ser-144–Gly-146, and Gly-157–Ala-159 each bind substrate. The active-site Acyl-thioester intermediate is the Cys-175.

It belongs to the LipB family.

The protein localises to the cytoplasm. It catalyses the reaction octanoyl-[ACP] + L-lysyl-[protein] = N(6)-octanoyl-L-lysyl-[protein] + holo-[ACP] + H(+). It participates in protein modification; protein lipoylation via endogenous pathway; protein N(6)-(lipoyl)lysine from octanoyl-[acyl-carrier-protein]: step 1/2. Catalyzes the transfer of endogenously produced octanoic acid from octanoyl-acyl-carrier-protein onto the lipoyl domains of lipoate-dependent enzymes. Lipoyl-ACP can also act as a substrate although octanoyl-ACP is likely to be the physiological substrate. The sequence is that of Octanoyltransferase from Hahella chejuensis (strain KCTC 2396).